A 363-amino-acid chain; its full sequence is MYYVGIMSGTSLDGIDAVLVDFSGPSFSLLHTCYIPYDQSLRAALLGLNQAGENELHRAAILSNQLSGWYAQAVGRLLEKSGIDPGEIIAVGCHGQTIRHCPQPENGYSIQLVNGALLAELTGMTVVTDFRSRDIAAGGQGAPLVPAFHHEMFAHRDIHRLIINIGGITNITSLPVSGGVNGFDCGPGNMLMDAWCLKHTGMTYDHNGSWAESGRVINPLLENLLNFPYFSLPPPKSTGREMFSLDWLQPCLRGDEATQDVQSTLLQLTVRTITDSVETYYPAVRELYLCGGGAHNGTLVTRLQQQLPGRRINLTDALGIEADWVEACAFAWLARQSIERAPGNLPAVTGATGSRTLGAIYPA.

9–16 (GTSLDGID) serves as a coordination point for ATP.

The protein belongs to the anhydro-N-acetylmuramic acid kinase family.

It catalyses the reaction 1,6-anhydro-N-acetyl-beta-muramate + ATP + H2O = N-acetyl-D-muramate 6-phosphate + ADP + H(+). It functions in the pathway amino-sugar metabolism; 1,6-anhydro-N-acetylmuramate degradation. The protein operates within cell wall biogenesis; peptidoglycan recycling. Functionally, catalyzes the specific phosphorylation of 1,6-anhydro-N-acetylmuramic acid (anhMurNAc) with the simultaneous cleavage of the 1,6-anhydro ring, generating MurNAc-6-P. Is required for the utilization of anhMurNAc either imported from the medium or derived from its own cell wall murein, and thus plays a role in cell wall recycling. This Nitrosomonas europaea (strain ATCC 19718 / CIP 103999 / KCTC 2705 / NBRC 14298) protein is Anhydro-N-acetylmuramic acid kinase.